The sequence spans 298 residues: Octopine catabolism/uptake operon regulatory protein OccR (298 aa).

The 58-residue stretch at 1-58 (MNLRQVEAFRAVMLTGQMTAAAELMLVTQPAISRLIKDFEQATKLQLFERRGNHIIPT) folds into the HTH lysR-type domain. The segment at residues 18–37 (MTAAAELMLVTQPAISRLIK) is a DNA-binding region (H-T-H motif).

The protein belongs to the LysR transcriptional regulatory family.

Functionally, positive regulatory protein for the occ operon involved in octopine catabolism and uptake. Also acts as a negative regulator of its expression. The chain is Octopine catabolism/uptake operon regulatory protein OccR (occR) from Agrobacterium tumefaciens (strain Ach5).